The following is a 373-amino-acid chain: Mannitol-1-phosphate 5-dehydrogenase (373 aa).

3 to 14 (ALHFGAGNIGRG) is a binding site for NAD(+).

Belongs to the mannitol dehydrogenase family.

It carries out the reaction D-mannitol 1-phosphate + NAD(+) = beta-D-fructose 6-phosphate + NADH + H(+). The sequence is that of Mannitol-1-phosphate 5-dehydrogenase from Bacillus pumilus (strain SAFR-032).